The chain runs to 254 residues: Alcohol dehydrogenase (254 aa).

10 to 33 contributes to the NAD(+) binding site; that stretch reads FVAGLGGIGLDTSREIVKSGPKNL. Ser138 serves as a coordination point for substrate. Tyr151 functions as the Proton acceptor in the catalytic mechanism.

This sequence belongs to the short-chain dehydrogenases/reductases (SDR) family. In terms of assembly, homodimer.

It catalyses the reaction a primary alcohol + NAD(+) = an aldehyde + NADH + H(+). The catalysed reaction is a secondary alcohol + NAD(+) = a ketone + NADH + H(+). The sequence is that of Alcohol dehydrogenase (Adh) from Drosophila affinidisjuncta (Fruit fly).